A 90-amino-acid chain; its full sequence is Large ribosomal subunit protein eL34 (90 aa).

Positions 38 to 65 (ARCGRPLGGVPRGRPPRVRRLSKTAKRP) are disordered. A compositionally biased stretch (basic residues) spans 51 to 62 (RPPRVRRLSKTA).

Belongs to the eukaryotic ribosomal protein eL34 family.

This Aeropyrum pernix (strain ATCC 700893 / DSM 11879 / JCM 9820 / NBRC 100138 / K1) protein is Large ribosomal subunit protein eL34 (rpl34e).